The primary structure comprises 415 residues: Gamma-glutamyl phosphate reductase (415 aa).

The protein belongs to the gamma-glutamyl phosphate reductase family.

It localises to the cytoplasm. It catalyses the reaction L-glutamate 5-semialdehyde + phosphate + NADP(+) = L-glutamyl 5-phosphate + NADPH + H(+). Its pathway is amino-acid biosynthesis; L-proline biosynthesis; L-glutamate 5-semialdehyde from L-glutamate: step 2/2. Its function is as follows. Catalyzes the NADPH-dependent reduction of L-glutamate 5-phosphate into L-glutamate 5-semialdehyde and phosphate. The product spontaneously undergoes cyclization to form 1-pyrroline-5-carboxylate. The protein is Gamma-glutamyl phosphate reductase of Cutibacterium acnes (strain DSM 16379 / KPA171202) (Propionibacterium acnes).